The primary structure comprises 436 residues: UPF0597 protein YhaM (436 aa).

This sequence belongs to the UPF0597 family.

This is UPF0597 protein YhaM from Salmonella dublin (strain CT_02021853).